The sequence spans 235 residues: 7-cyano-7-deazaguanine synthase (235 aa).

Residue 11 to 21 (FSGGQDSTTCV) coordinates ATP. Zn(2+)-binding residues include Cys-199, Cys-214, Cys-217, and Cys-220.

The protein belongs to the QueC family. Requires Zn(2+) as cofactor.

The enzyme catalyses 7-carboxy-7-deazaguanine + NH4(+) + ATP = 7-cyano-7-deazaguanine + ADP + phosphate + H2O + H(+). Its pathway is purine metabolism; 7-cyano-7-deazaguanine biosynthesis. Functionally, catalyzes the ATP-dependent conversion of 7-carboxy-7-deazaguanine (CDG) to 7-cyano-7-deazaguanine (preQ(0)). This chain is 7-cyano-7-deazaguanine synthase, found in Janthinobacterium sp. (strain Marseille) (Minibacterium massiliensis).